Consider the following 372-residue polypeptide: Homeobox protein Nkx-2.1 (372 aa).

The segment at residues 161 to 220 (RRKRRVLFSQAQVYELERRFKQQKYLSAPEREHLASMIHLTPTQVKIWFQNHRYKMKRQA) is a DNA-binding region (homeobox). Disordered regions lie at residues 219–258 (QAKD…SPRR), 269–288 (KPCQ…SHAQ), and 312–340 (AGLG…SPAG). A compositionally biased stretch (gly residues) spans 233 to 244 (SGGGGGGGGGAG). The span at 245 to 254 (CPQQQQAQQQ) shows a compositional bias: low complexity. The residue at position 255 (Ser-255) is a Phosphoserine. The segment covering 273–288 (AGAPAPGAASLQSHAQ) has biased composition (low complexity).

Belongs to the NK-2 homeobox family. As to quaternary structure, interacts with WWTR1. Phosphorylated on serine residues by STK3/MST2. As to expression, thyroid, lung and brain.

The protein resides in the nucleus. Its function is as follows. Transcription factor that binds and activates the promoter of thyroid specific genes such as thyroglobulin, thyroperoxidase, and thyrotropin receptor. Crucial in the maintenance of the thyroid differentiation phenotype. May play a role in lung development and surfactant homeostasis. Forms a regulatory loop with GRHL2 that coordinates lung epithelial cell morphogenesis and differentiation. Activates the transcription of GNRHR and plays a role in enhancing the circadian oscillation of its gene expression. Represses the transcription of the circadian transcriptional repressor NR1D1. In Mus musculus (Mouse), this protein is Homeobox protein Nkx-2.1.